The chain runs to 510 residues: Fumarate hydratase, mitochondrial (510 aa).

The transit peptide at 1 to 44 (MYRALRLLARSRPLVRAPAAALASAPGLGGAAVPSFWPPNAARM) directs the protein to the mitochondrion. Lysine 61, lysine 66, and lysine 80 each carry N6-acetyllysine; alternate. 3 positions are modified to N6-succinyllysine; alternate: lysine 61, lysine 66, and lysine 80. Residues threonine 85 and threonine 90 each carry the phosphothreonine modification. Lysine 94 carries the N6-acetyllysine modification. Residues lysine 115 and lysine 122 each carry the N6-acetyllysine; alternate modification. N6-succinyllysine; alternate occurs at positions 115 and 122. Substrate is bound by residues 145 to 147 (SGT), 176 to 179 (HPND), and 186 to 188 (SSN). The residue at position 213 (lysine 213) is an N6-acetyllysine. Residue lysine 223 is modified to N6-acetyllysine; alternate. Lysine 223 carries the post-translational modification N6-succinyllysine; alternate. Threonine 234 is a binding site for substrate. Catalysis depends on histidine 235, which acts as the Proton donor/acceptor. Position 236 is a phosphothreonine; by PRKDC (threonine 236). Lysine 256 carries the N6-acetyllysine modification. Lysine 292 carries the post-translational modification N6-acetyllysine; alternate. Lysine 292 is subject to N6-succinyllysine; alternate. Serine 365 is an active-site residue. Substrate-binding positions include serine 366 and 371–373 (KVN). A Phosphoserine modification is found at serine 366. An N6-succinyllysine mark is found at lysine 467 and lysine 473. Lysine 502 is modified (N6-acetyllysine).

It belongs to the class-II fumarase/aspartase family. Fumarase subfamily. As to quaternary structure, homotetramer. Interacts with H2AZ1. In terms of processing, phosphorylation at Thr-236 by PRKDC in response to DNA damage promotes translocation to the nucleus and recruitment to DNA double-strand breaks (DSBs). Expressed in red blood cells; underexpressed in red blood cells (cytoplasm) of patients with hereditary non-spherocytic hemolytic anemia of unknown etiology.

Its subcellular location is the mitochondrion. The protein localises to the cytoplasm. The protein resides in the cytosol. It is found in the nucleus. It localises to the chromosome. It catalyses the reaction (S)-malate = fumarate + H2O. Its pathway is carbohydrate metabolism; tricarboxylic acid cycle; (S)-malate from fumarate: step 1/1. In terms of biological role, catalyzes the reversible stereospecific interconversion of fumarate to L-malate. Experiments in other species have demonstrated that specific isoforms of this protein act in defined pathways and favor one direction over the other. Catalyzes the hydration of fumarate to L-malate in the tricarboxylic acid (TCA) cycle to facilitate a transition step in the production of energy in the form of NADH. Functionally, catalyzes the dehydration of L-malate to fumarate. Fumarate metabolism in the cytosol plays a role during urea cycle and arginine metabolism; fumarate being a by-product of the urea cycle and amino-acid catabolism. Also plays a role in DNA repair by promoting non-homologous end-joining (NHEJ). In response to DNA damage and phosphorylation by PRKDC, translocates to the nucleus and accumulates at DNA double-strand breaks (DSBs): acts by catalyzing formation of fumarate, an inhibitor of KDM2B histone demethylase activity, resulting in enhanced dimethylation of histone H3 'Lys-36' (H3K36me2). This Homo sapiens (Human) protein is Fumarate hydratase, mitochondrial.